Here is a 957-residue protein sequence, read N- to C-terminus: Receptor-like protein 53 (957 aa).

An N-terminal signal peptide occupies residues 1-30 (MEGFWNSKSIIRITLSFIFLFICHFLDVLA). Topologically, residues 31-910 (APTRNLCRPE…EEEDEDLISW (880 aa)) are extracellular. N-linked (GlcNAc...) asparagine glycosylation is found at Asn78, Asn114, Asn143, Asn167, and Asn191. LRR repeat units follow at residues 120–143 (LHFLTTLDLSFNDFKGQITSSIEN), 144–170 (LSHLTYLDLSSNHFSGQILNSIGNLSR), 172–192 (TYLNLFDNQFSGQAPSSICNL), 193–216 (SHLTFLDLSYNRFFGQFPSSIGGL), 217–240 (SHLTTLSLFSNKFSGQIPSSIGNL), 241–266 (SNLTTLDLSNNNFSGQIPSFIGNLSQ), 268–287 (TFLGLFSNNFVGEIPSSFGN), 288–312 (LNQLTRLYVDDNKLSGNFPNVLLNL), 313–336 (TGLSLLSLSNNKFTGTLPPNITSL), 338–360 (NLMDFDASDNAFTGTFPSFLFTI), 361–384 (PSLTYIRLNGNQLKGTLEFGNISS), and 386–409 (SNLYELDIGNNNFIGPIPSSISKL). Residues Asn239, Asn242, Asn252, and Asn263 are each glycosylated (N-linked (GlcNAc...) asparagine). N-linked (GlcNAc...) asparagine glycans are attached at residues Asn311 and Asn332. Asn381 carries N-linked (GlcNAc...) asparagine glycosylation. One copy of the LRR 13; degenerate repeat lies at 412–433 (LFRLDISHLNTQGPVDFSIFSH). LRR repeat units lie at residues 434-458 (LKSLLDLNISHLNTTTRIDLNYFLS), 460-483 (FKRLLLLDLSGNHVSATNKSSVSD), 486-509 (SQLIQSLYLSGCGITEFPEFVRTQ), 510-533 (HELGFLDISNNKIKGQVPDWLWRL), 535-556 (ILYYVNLSNNTLIGFQRPSKPE), 558-580 (SLLYLLGSNNNFIGKIPSFICGL), 581-604 (RSLNTLDLSDNNFNGSIPRCMGHL), 605-629 (KSTLSVLNLRQNHLSGGLPKQIFEI), 631-651 (RSLDVGHNQLVGKLPRSLSFF), 652-674 (STLEVLNVESNRINDTFPFWLSS), 675-697 (LPKLQVLVLRSNAFHGPIHEATF), 698-721 (PELRIIDISHNRFNGTLPTEYFVK), 765-789 (LTIYTAVDFSGNRFEGEIPKSIGLL), 790-813 (KELLVLSLSNNAFSGHMPSSMGNL), 814-837 (TALESLDVSKNKLTGEIPQELGDL), and 839-862 (FLAYMNFSHNQLAGLVPGGQQFLT). N-linked (GlcNAc...) asparagine glycans are attached at residues Asn441, Asn446, and Asn477. Residues Asn540 and Asn543 are each glycosylated (N-linked (GlcNAc...) asparagine). Asn594 carries N-linked (GlcNAc...) asparagine glycosylation. N-linked (GlcNAc...) asparagine glycosylation is present at Asn665. Asn711 carries N-linked (GlcNAc...) asparagine glycosylation. A glycan (N-linked (GlcNAc...) asparagine) is linked at Asn812. Residues Asn844 and Asn864 are each glycosylated (N-linked (GlcNAc...) asparagine). Residues 911–931 (IAAAIGFGPGIAFGLMFGYIL) traverse the membrane as a helical segment. Residues 932 to 957 (VSYKPEWFMNPFDRNNRRQKRHKTTH) are Cytoplasmic-facing.

It belongs to the RLP family.

The protein localises to the cell membrane. In Arabidopsis thaliana (Mouse-ear cress), this protein is Receptor-like protein 53.